A 198-amino-acid chain; its full sequence is Nudix hydrolase 21, chloroplastic (198 aa).

A chloroplast-targeting transit peptide spans 1–37 (MISLFISNFSNLSNLSPTFDNMNMNIPSKKIVPVPTP). One can recognise a Nudix hydrolase domain in the interval 59–191 (GYRQVVGCVP…WMREALEAFI (133 aa)). Residues 98–119 (GGWEIDESIEEAALRETIEEAG) carry the Nudix box motif. Glu113 and Glu117 together coordinate Mg(2+).

The protein belongs to the Nudix hydrolase family. Mg(2+) is required as a cofactor. Requires Mn(2+) as cofactor. Expressed in roots, leaves, stems and inflorescences.

The protein localises to the plastid. It is found in the chloroplast. In terms of biological role, probably mediates the hydrolysis of some nucleoside diphosphate derivatives. The chain is Nudix hydrolase 21, chloroplastic (NUDT21) from Arabidopsis thaliana (Mouse-ear cress).